The chain runs to 359 residues: N-acetyl-gamma-glutamyl-phosphate reductase (359 aa).

Cys162 is a catalytic residue.

The protein belongs to the NAGSA dehydrogenase family. Type 1 subfamily.

It is found in the cytoplasm. It carries out the reaction N-acetyl-L-glutamate 5-semialdehyde + phosphate + NADP(+) = N-acetyl-L-glutamyl 5-phosphate + NADPH + H(+). The protein operates within amino-acid biosynthesis; L-arginine biosynthesis; N(2)-acetyl-L-ornithine from L-glutamate: step 3/4. Its function is as follows. Catalyzes the NADPH-dependent reduction of N-acetyl-5-glutamyl phosphate to yield N-acetyl-L-glutamate 5-semialdehyde. The chain is N-acetyl-gamma-glutamyl-phosphate reductase from Prochlorococcus marinus (strain MIT 9211).